Here is a 611-residue protein sequence, read N- to C-terminus: ATP-dependent zinc metalloprotease FtsH (611 aa).

Position 1 (Met1) is a topological domain, cytoplasmic. Residues 2 to 22 (VKNLIFWLVITVVLMSIFQNF) traverse the membrane as a helical segment. Topologically, residues 23–98 (NTNDVNNHKV…IGAIPEEPSL (76 aa)) are extracellular. Residues 99–119 (FISILISWFPMLLLIGVWIFF) form a helical membrane-spanning segment. Residues 120 to 611 (MRQMQMGGGK…KGWIETDTNK (492 aa)) lie on the Cytoplasmic side of the membrane. Residue 192–199 (GPPGTGKT) participates in ATP binding. His414 is a Zn(2+) binding site. Residue Glu415 is part of the active site. Residues His418 and Asp492 each coordinate Zn(2+).

It in the central section; belongs to the AAA ATPase family. The protein in the C-terminal section; belongs to the peptidase M41 family. As to quaternary structure, homohexamer. It depends on Zn(2+) as a cofactor.

Its subcellular location is the cell membrane. Acts as a processive, ATP-dependent zinc metallopeptidase for both cytoplasmic and membrane proteins. Plays a role in the quality control of integral membrane proteins. The sequence is that of ATP-dependent zinc metalloprotease FtsH from Buchnera aphidicola subsp. Acyrthosiphon pisum (strain APS) (Acyrthosiphon pisum symbiotic bacterium).